Consider the following 890-residue polypeptide: ATP-dependent DNA helicase DDX11 (890 aa).

The Helicase ATP-binding domain occupies 4–424 (KSGRFPFPFQ…KNLMYIKQIL (421 aa)). ATP is bound at residue 39 to 46 (SPTGTGKS). Over residues 71 to 85 (LLEGQKDSDVVKEKN) the composition is skewed to basic and acidic residues. Disordered stretches follow at residues 71-95 (LLEG…EPDW) and 176-199 (EYES…DDDD). Residues Cys-246, Cys-264, Cys-294, and Cys-329 each contribute to the [4Fe-4S] cluster site. The DEAH box signature appears at 372–375 (DEAH).

This sequence belongs to the DEAD box helicase family. DEAH subfamily. DDX11/CHL1 sub-subfamily. [4Fe-4S] cluster is required as a cofactor.

It is found in the nucleus. Its subcellular location is the nucleolus. The protein resides in the cytoplasm. The protein localises to the cytoskeleton. It localises to the spindle pole. It is found in the midbody. Its subcellular location is the microtubule organizing center. The protein resides in the centrosome. It carries out the reaction Couples ATP hydrolysis with the unwinding of duplex DNA at the replication fork by translocating in the 5'-3' direction. This creates two antiparallel DNA single strands (ssDNA). The leading ssDNA polymer is the template for DNA polymerase III holoenzyme which synthesizes a continuous strand.. It catalyses the reaction ATP + H2O = ADP + phosphate + H(+). In terms of biological role, DNA-dependent ATPase and ATP-dependent DNA helicase that participates in various functions in genomic stability, including DNA replication, DNA repair and heterochromatin organization as well as in ribosomal RNA synthesis. Plays a role in DNA double-strand break (DSB) repair at the DNA replication fork during DNA replication recovery from DNA damage. Plays a role in the regulation of sister chromatid cohesion and mitotic chromosome segregation. Stimulates 5'-single-stranded DNA flap endonuclease activity of FEN1 in an ATP- and helicase-independent manner. Also plays a role in heterochromatin organization. Involved in rRNA transcription activation through binding to active hypomethylated rDNA gene loci by recruiting UBTF and the RNA polymerase Pol I transcriptional machinery. Plays a role in embryonic development. Associates with chromatin at DNA replication fork regions. Binds to single- and double-stranded DNAs. This chain is ATP-dependent DNA helicase DDX11, found in Danio rerio (Zebrafish).